The sequence spans 226 residues: PKHD-type hydroxylase PP_0862 (226 aa).

One can recognise a Fe2OG dioxygenase domain in the interval 78–178 (KVFPPLINCY…RYAAFFWTQS (101 aa)). Fe cation contacts are provided by histidine 96, aspartate 98, and histidine 159. Arginine 169 contacts 2-oxoglutarate.

Fe(2+) serves as cofactor. L-ascorbate is required as a cofactor.

This chain is PKHD-type hydroxylase PP_0862, found in Pseudomonas putida (strain ATCC 47054 / DSM 6125 / CFBP 8728 / NCIMB 11950 / KT2440).